A 138-amino-acid polypeptide reads, in one-letter code: Phosphoribosyl-AMP cyclohydrolase (138 aa).

Position 85 (aspartate 85) interacts with Mg(2+). Position 86 (cysteine 86) interacts with Zn(2+). Mg(2+) is bound by residues aspartate 87 and aspartate 89. Cysteine 102 and cysteine 109 together coordinate Zn(2+).

Belongs to the PRA-CH family. Homodimer. Requires Mg(2+) as cofactor. The cofactor is Zn(2+).

It is found in the cytoplasm. The catalysed reaction is 1-(5-phospho-beta-D-ribosyl)-5'-AMP + H2O = 1-(5-phospho-beta-D-ribosyl)-5-[(5-phospho-beta-D-ribosylamino)methylideneamino]imidazole-4-carboxamide. Its pathway is amino-acid biosynthesis; L-histidine biosynthesis; L-histidine from 5-phospho-alpha-D-ribose 1-diphosphate: step 3/9. In terms of biological role, catalyzes the hydrolysis of the adenine ring of phosphoribosyl-AMP. This Methanothermobacter thermautotrophicus (strain ATCC 29096 / DSM 1053 / JCM 10044 / NBRC 100330 / Delta H) (Methanobacterium thermoautotrophicum) protein is Phosphoribosyl-AMP cyclohydrolase.